The primary structure comprises 69 residues: U2-agatoxin-Ao1i (69 aa).

The first 20 residues, 1-20, serve as a signal peptide directing secretion; it reads MKAIISLLLISAMVFSMIEA. Positions 21–34 are excised as a propeptide; the sequence is VPVXXGLQLFESER. Disulfide bonds link C36–C52, C43–C57, and C51–C67. L68 is modified (leucine amide).

The protein belongs to the neurotoxin 01 (U2-agtx) family. In terms of tissue distribution, expressed by the venom gland.

It localises to the secreted. Insect active toxin causing rapid but reversible paralysis in crickets. No activity shown in mammals. Does not show effect on mammalian voltage-gated calcium channels. The protein is U2-agatoxin-Ao1i of Agelena orientalis (Funnel-web spider).